The chain runs to 96 residues: Co-chaperonin GroES (96 aa).

It belongs to the GroES chaperonin family. Heptamer of 7 subunits arranged in a ring. Interacts with the chaperonin GroEL.

It is found in the cytoplasm. Functionally, together with the chaperonin GroEL, plays an essential role in assisting protein folding. The GroEL-GroES system forms a nano-cage that allows encapsulation of the non-native substrate proteins and provides a physical environment optimized to promote and accelerate protein folding. GroES binds to the apical surface of the GroEL ring, thereby capping the opening of the GroEL channel. This is Co-chaperonin GroES from Ralstonia nicotianae (strain ATCC BAA-1114 / GMI1000) (Ralstonia solanacearum).